Consider the following 84-residue polypeptide: Toxin To10 (84 aa).

The first 19 residues, 1-19 (MNYSTLIAVASLLTAGTES), serve as a signal peptide directing secretion. Residues 21 to 80 (KDGYPVEGSCAFPCGYDNAYCDKLCKERKADSGYCYWVNILCYCYGLPDNAAIKGYGRCK) enclose the LCN-type CS-alpha/beta domain. 4 disulfides stabilise this stretch: Cys30-Cys79, Cys34-Cys55, Cys41-Cys62, and Cys45-Cys64. At Pro81 the chain carries Proline amide.

This sequence belongs to the long (4 C-C) scorpion toxin superfamily. Sodium channel inhibitor family. Alpha subfamily. As to expression, expressed by the venom gland.

The protein resides in the secreted. Functionally, alpha toxins bind voltage-independently at site-3 of sodium channels (Nav) and inhibit the inactivation of the activated channels, thereby blocking neuronal transmission. In Tityus obscurus (Amazonian scorpion), this protein is Toxin To10.